A 439-amino-acid chain; its full sequence is 5-methylthioadenosine/S-adenosylhomocysteine deaminase (439 aa).

Zn(2+) contacts are provided by His-70 and His-72. Positions 99 and 192 each coordinate substrate. His-219 is a binding site for Zn(2+). Substrate is bound by residues Glu-222 and Asp-307. Asp-307 lines the Zn(2+) pocket.

This sequence belongs to the metallo-dependent hydrolases superfamily. MTA/SAH deaminase family. Requires Zn(2+) as cofactor.

The enzyme catalyses S-adenosyl-L-homocysteine + H2O + H(+) = S-inosyl-L-homocysteine + NH4(+). The catalysed reaction is S-methyl-5'-thioadenosine + H2O + H(+) = S-methyl-5'-thioinosine + NH4(+). Functionally, catalyzes the deamination of 5-methylthioadenosine and S-adenosyl-L-homocysteine into 5-methylthioinosine and S-inosyl-L-homocysteine, respectively. Is also able to deaminate adenosine. This Thermodesulfovibrio yellowstonii (strain ATCC 51303 / DSM 11347 / YP87) protein is 5-methylthioadenosine/S-adenosylhomocysteine deaminase.